Consider the following 394-residue polypeptide: 1-deoxy-D-xylulose 5-phosphate reductoisomerase (394 aa).

Positions 13, 14, 15, 16, 40, 41, and 127 each coordinate NADPH. Residue K128 participates in 1-deoxy-D-xylulose 5-phosphate binding. E129 contributes to the NADPH binding site. D153 contacts Mn(2+). The 1-deoxy-D-xylulose 5-phosphate site is built by S154, E155, S184, and H207. Residue E155 participates in Mn(2+) binding. G213 lines the NADPH pocket. 4 residues coordinate 1-deoxy-D-xylulose 5-phosphate: S220, N225, K226, and E229. E229 is a Mn(2+) binding site.

It belongs to the DXR family. It depends on Mg(2+) as a cofactor. The cofactor is Mn(2+).

The enzyme catalyses 2-C-methyl-D-erythritol 4-phosphate + NADP(+) = 1-deoxy-D-xylulose 5-phosphate + NADPH + H(+). It functions in the pathway isoprenoid biosynthesis; isopentenyl diphosphate biosynthesis via DXP pathway; isopentenyl diphosphate from 1-deoxy-D-xylulose 5-phosphate: step 1/6. In terms of biological role, catalyzes the NADPH-dependent rearrangement and reduction of 1-deoxy-D-xylulose-5-phosphate (DXP) to 2-C-methyl-D-erythritol 4-phosphate (MEP). In Chromobacterium violaceum (strain ATCC 12472 / DSM 30191 / JCM 1249 / CCUG 213 / NBRC 12614 / NCIMB 9131 / NCTC 9757 / MK), this protein is 1-deoxy-D-xylulose 5-phosphate reductoisomerase.